The primary structure comprises 467 residues: ATP synthase subunit beta (467 aa).

Glycine 150–threonine 157 is a binding site for ATP.

It belongs to the ATPase alpha/beta chains family. As to quaternary structure, F-type ATPases have 2 components, CF(1) - the catalytic core - and CF(0) - the membrane proton channel. CF(1) has five subunits: alpha(3), beta(3), gamma(1), delta(1), epsilon(1). CF(0) has three main subunits: a(1), b(2) and c(9-12). The alpha and beta chains form an alternating ring which encloses part of the gamma chain. CF(1) is attached to CF(0) by a central stalk formed by the gamma and epsilon chains, while a peripheral stalk is formed by the delta and b chains.

Its subcellular location is the cell inner membrane. The catalysed reaction is ATP + H2O + 4 H(+)(in) = ADP + phosphate + 5 H(+)(out). In terms of biological role, produces ATP from ADP in the presence of a proton gradient across the membrane. The catalytic sites are hosted primarily by the beta subunits. The polypeptide is ATP synthase subunit beta (Vibrio cholerae serotype O1 (strain ATCC 39541 / Classical Ogawa 395 / O395)).